A 793-amino-acid polypeptide reads, in one-letter code: Coiled-coil domain-containing protein 175 (793 aa).

5 coiled-coil regions span residues 131 to 163, 205 to 377, 431 to 535, 562 to 679, and 716 to 745; these read EINT…NEAL, KRED…VLSE, KTVY…MLMK, LPQL…KYRE, and LVDN…QHVS.

The sequence is that of Coiled-coil domain-containing protein 175 (CCDC175) from Homo sapiens (Human).